The primary structure comprises 116 residues: AQNKGSDDCGGFLKNYSGWISYYKALTTNCVWTIEMKPGHKIILQILPLNLTCGKEYLEVRDQRAGPDNFLKVCGGTGFVYQSSHNVATVKYSRDSHHPASSFNVYFYGIPQGAKA.

A disulfide bridge links cysteine 9 with cysteine 30. The CUB domain maps to 9–110 (CGGFLKNYSG…SSFNVYFYGI (102 aa)). Asparagine 50 is a glycosylation site (N-linked (GlcNAc...) asparagine). A disulfide bridge connects residues cysteine 53 and cysteine 74. The residue at position 85 (histidine 85) is a Methylhistidine.

The protein belongs to the spermadhesin family. The residue at position 85 was identified as a methylhistidine by mass spectrometry.

It is found in the secreted. AQN proteins mediate the binding of boar spermatozoa to component(s) of the egg's zona pellucida by a carbohydrate-binding mechanism. AQN proteins are secretory components of the male accessory glands being coated to the sperm surface at the time of ejaculation. They possess as well heparin-, serine-protease-inhibitor-binding capability. The protein is Carbohydrate-binding protein AQN-3 of Sus scrofa (Pig).